The following is a 194-amino-acid chain: dTTP/UTP pyrophosphatase (194 aa).

Asp-69 (proton acceptor) is an active-site residue.

Belongs to the Maf family. YhdE subfamily. The cofactor is a divalent metal cation.

Its subcellular location is the cytoplasm. The catalysed reaction is dTTP + H2O = dTMP + diphosphate + H(+). The enzyme catalyses UTP + H2O = UMP + diphosphate + H(+). Functionally, nucleoside triphosphate pyrophosphatase that hydrolyzes dTTP and UTP. May have a dual role in cell division arrest and in preventing the incorporation of modified nucleotides into cellular nucleic acids. The sequence is that of dTTP/UTP pyrophosphatase from Symbiobacterium thermophilum (strain DSM 24528 / JCM 14929 / IAM 14863 / T).